Consider the following 476-residue polypeptide: MGIKFLEVIKPFCAVLPEIQKPERKIQFREKVLWTAITLFIFLVCCQIPLFGIMSSDSADPFYWMRVILASNRGTLMELGISPIVTSGLIMQLLAGAKIIEVGDTPKDRALFNGAQKLFGMIITIGQAIVYVMTGMYGDPSEMGAGICLVIIIQLFVAGLIVLLLDELLQKGYGLGSGISLFIATNICETIVWKAFSPTTVNTGRGTEFEGAIIALFHLLATRTDKVRALREAFYRQNLPNLMNLIATVFVFAVVIYFQGFRVDLPIKSARYRGQYNTYPIKLFYTSNIPIILQSALVSNLYVISQMLSTRFSGNFLVNLLGTWSDTSTGGPARAYPVGGLCYYFSPPESFGSVLDDPVHASIYIVFMLGSCAFFSKTWIEVSGSSAKDVAKQLKEQQMVMRGHRETSMVHELNRYIPTAAAFGGLCIGGLSVMADFLGAIGSGTGILLAVTIIYQYFEIFVKEQSEMGSMGALLF.

The Cytoplasmic portion of the chain corresponds to 2–33; sequence GIKFLEVIKPFCAVLPEIQKPERKIQFREKVL. A helical transmembrane segment spans residues 34-53; sequence WTAITLFIFLVCCQIPLFGI. Residues 54 to 76 are Lumenal-facing; the sequence is MSSDSADPFYWMRVILASNRGTL. A helical transmembrane segment spans residues 77–96; sequence MELGISPIVTSGLIMQLLAG. Residues 97–117 lie on the Cytoplasmic side of the membrane; it reads AKIIEVGDTPKDRALFNGAQK. The helical transmembrane segment at 118–138 threads the bilayer; sequence LFGMIITIGQAIVYVMTGMYG. Residues 139–144 lie on the Lumenal side of the membrane; that stretch reads DPSEMG. The helical transmembrane segment at 145–165 threads the bilayer; sequence AGICLVIIIQLFVAGLIVLLL. Over 166–172 the chain is Cytoplasmic; it reads DELLQKG. Residues 173–193 traverse the membrane as a helical segment; the sequence is YGLGSGISLFIATNICETIVW. The Lumenal portion of the chain corresponds to 194 to 240; sequence KAFSPTTVNTGRGTEFEGAIIALFHLLATRTDKVRALREAFYRQNLP. Residues 241–261 form a helical membrane-spanning segment; it reads NLMNLIATVFVFAVVIYFQGF. The Cytoplasmic segment spans residues 262 to 288; sequence RVDLPIKSARYRGQYNTYPIKLFYTSN. The chain crosses the membrane as a helical span at residues 289–309; it reads IPIILQSALVSNLYVISQMLS. Topologically, residues 310-354 are lumenal; sequence TRFSGNFLVNLLGTWSDTSTGGPARAYPVGGLCYYFSPPESFGSV. The helical transmembrane segment at 355–375 threads the bilayer; that stretch reads LDDPVHASIYIVFMLGSCAFF. Over 376–420 the chain is Cytoplasmic; that stretch reads SKTWIEVSGSSAKDVAKQLKEQQMVMRGHRETSMVHELNRYIPTA. The helical transmembrane segment at 421-441 threads the bilayer; sequence AAFGGLCIGGLSVMADFLGAI. Residues 442–445 are Lumenal-facing; it reads GSGT. The helical transmembrane segment at 446-462 threads the bilayer; that stretch reads GILLAVTIIYQYFEIFV. Residues 463–476 lie on the Cytoplasmic side of the membrane; the sequence is KEQSEMGSMGALLF.

Belongs to the SecY/SEC61-alpha family. As to quaternary structure, the SEC61 channel-forming translocon complex consists of channel-forming core components SEC61A1, SEC61B and SEC61G and different auxiliary components such as SEC62 and SEC63. The SEC61 channel associates with the multi-pass translocon (MPT) complex.

Its subcellular location is the endoplasmic reticulum membrane. Component of SEC61 channel-forming translocon complex that mediates transport of signal peptide-containing precursor polypeptides across the endoplasmic reticulum (ER). Forms a ribosome receptor and a gated pore in the ER membrane, both functions required for cotranslational translocation of nascent polypeptides. May cooperate with auxiliary protein SEC62, SEC63 and HSPA5/BiP to enable post-translational transport of small presecretory proteins. The SEC61 channel is also involved in ER membrane insertion of transmembrane proteins: it mediates membrane insertion of the first few transmembrane segments of proteins, while insertion of subsequent transmembrane regions of multi-pass membrane proteins is mediated by the multi-pass translocon (MPT) complex. The sequence is that of Protein transport protein Sec61 subunit alpha (sec61a) from Gadus ogac (Greenland cod).